A 383-amino-acid polypeptide reads, in one-letter code: Dual-specificity RNA methyltransferase RlmN (383 aa).

Glutamate 93 acts as the Proton acceptor in catalysis. The Radical SAM core domain maps to 99–339 (EETRGTLCVS…TTIRKTRGDD (241 aa)). Residues cysteine 106 and cysteine 344 are joined by a disulfide bond. [4Fe-4S] cluster-binding residues include cysteine 113, cysteine 117, and cysteine 120. Residues 170-171 (GE), serine 202, 224-226 (SLH), and asparagine 301 contribute to the S-adenosyl-L-methionine site. Cysteine 344 (S-methylcysteine intermediate) is an active-site residue.

The protein belongs to the radical SAM superfamily. RlmN family. The cofactor is [4Fe-4S] cluster.

The protein localises to the cytoplasm. The enzyme catalyses adenosine(2503) in 23S rRNA + 2 reduced [2Fe-2S]-[ferredoxin] + 2 S-adenosyl-L-methionine = 2-methyladenosine(2503) in 23S rRNA + 5'-deoxyadenosine + L-methionine + 2 oxidized [2Fe-2S]-[ferredoxin] + S-adenosyl-L-homocysteine. It catalyses the reaction adenosine(37) in tRNA + 2 reduced [2Fe-2S]-[ferredoxin] + 2 S-adenosyl-L-methionine = 2-methyladenosine(37) in tRNA + 5'-deoxyadenosine + L-methionine + 2 oxidized [2Fe-2S]-[ferredoxin] + S-adenosyl-L-homocysteine. Specifically methylates position 2 of adenine 2503 in 23S rRNA and position 2 of adenine 37 in tRNAs. m2A2503 modification seems to play a crucial role in the proofreading step occurring at the peptidyl transferase center and thus would serve to optimize ribosomal fidelity. The chain is Dual-specificity RNA methyltransferase RlmN from Ralstonia pickettii (strain 12J).